Here is a 94-residue protein sequence, read N- to C-terminus: Small ribosomal subunit protein uS19 (94 aa).

It belongs to the universal ribosomal protein uS19 family.

Its function is as follows. Protein S19 forms a complex with S13 that binds strongly to the 16S ribosomal RNA. This Clostridium novyi (strain NT) protein is Small ribosomal subunit protein uS19.